Reading from the N-terminus, the 87-residue chain is U-scoloptoxin(23)-Er1a (87 aa).

The N-terminal stretch at 1-29 (MSLIVVRTHSFLFVLVLLLFASVFHSVDS) is a signal peptide. Residues 32–54 (FNPNGRYGRRDSASALSDASENK) form a disordered region.

It belongs to the scoloptoxin-23 family. Expressed by the venom gland.

Its subcellular location is the secreted. The polypeptide is U-scoloptoxin(23)-Er1a (Ethmostigmus rubripes (Giant centipede)).